A 349-amino-acid chain; its full sequence is tRNA pseudouridine synthase D (349 aa).

Residue Phe27 coordinates substrate. Asp80 serves as the catalytic Nucleophile. Residue Asn129 coordinates substrate. The TRUD domain occupies 155–303 (GVPNYFGAQR…VEAARRAMLL (149 aa)). Phe329 serves as a coordination point for substrate.

The protein belongs to the pseudouridine synthase TruD family.

It carries out the reaction uridine(13) in tRNA = pseudouridine(13) in tRNA. Its function is as follows. Responsible for synthesis of pseudouridine from uracil-13 in transfer RNAs. This is tRNA pseudouridine synthase D from Escherichia coli (strain SMS-3-5 / SECEC).